We begin with the raw amino-acid sequence, 154 residues long: Cold shock domain-containing protein C2 (154 aa).

2 disordered regions span residues 1 to 22 (MTSESTSPPVVPPLHSPKSPVW) and 36 to 62 (ERGGGVSPRDLPSPLPTKRTRTYSATA). Ser19 is subject to Phosphoserine. A CSD domain is found at 69-136 (VFKGVCKQFS…KFQAVEVVLT (68 aa)).

As to expression, brain-specific. Expression restricted to the pyramidal neurons of the cerebral cortex and in the Purkinje cells of the cerebellum.

The protein localises to the nucleus. It is found in the cytoplasm. In terms of biological role, RNA-binding factor which binds specifically to the very 3'-UTR ends of both histone H1 and H3.3 mRNAs, encompassing the polyadenylation signal. Might play a central role in the negative regulation of histone variant synthesis in the developing brain. The protein is Cold shock domain-containing protein C2 (Csdc2) of Rattus norvegicus (Rat).